The chain runs to 511 residues: Peptide transporter YePEPT (511 aa).

The Cytoplasmic portion of the chain corresponds to 1–19 (MQTSTNTPGGRTFFGHPYP). The chain crosses the membrane as a helical span at residues 20 to 45 (LSGLFLSEMWERFSFYGIRPLLILFM). Residues 46 to 59 (AATVFDGGMGLPRE) are Periplasmic-facing. A helical membrane pass occupies residues 60 to 84 (QASAIVGIFAGSMYLAALPGGLLAD). The Cytoplasmic segment spans residues 85-88 (NWLG). The helical transmembrane segment at 89–109 (QQRAVWYGSILIALGHLSIAL) threads the bilayer. Residues 110–115 (SAFFGN) lie on the Periplasmic side of the membrane. The chain crosses the membrane as a helical span at residues 116–138 (DLFFIGLVFIVLGTGLFKTCISV). At 139 to 149 (MVGTLYKPGDA) the chain is on the cytoplasmic side. Residues 150-175 (RRDGGFSLFYMGINMGSFIAPLLSGW) form a helical membrane-spanning segment. Over 176 to 181 (LLRTHG) the chain is Periplasmic. A helical membrane pass occupies residues 182–208 (WHWGFGIGGIGMLVALLIFRGFAIPAM). Over 209–232 (KRYDAEVGLDSSWNKPTNQRQGVG) the chain is Cytoplasmic. The helical transmembrane segment at 233–253 (RWVTAIMAVVVVIIALISQGV) threads the bilayer. Residues 254–256 (IPI) are Periplasmic-facing. Residues 257 to 279 (NPVMIASLLVYVIAASVTLYFIY) traverse the membrane as a helical segment. Residues 280–294 (LFAFAKMSRKDRARL) are Cytoplasmic-facing. The chain crosses the membrane as a helical span at residues 295 to 321 (LVCFILLVSAAFFWSAFEQKPTSFNLF). Topologically, residues 322–335 (ANDYTDRMVMGFEI) are periplasmic. A helical membrane pass occupies residues 336-357 (PTVWFQSINALFIILLAPVFSW). Topologically, residues 358-369 (AWPALAKKKIQP) are cytoplasmic. Residues 370-396 (SSITKFVIGILCAAAGFAVMMYAAQHV) traverse the membrane as a helical segment. Topologically, residues 397-405 (LSSGGAGVS) are periplasmic. A helical membrane pass occupies residues 406–426 (PLWLVMSILLLTLGELCLSPI). Over 427–441 (GLATMTLLAPDRMRG) the chain is Cytoplasmic. A helical transmembrane segment spans residues 442–462 (QVMGLWFCASSLGNLAAGLIG). Topologically, residues 463-471 (GHVKADQLD) are periplasmic. A helical transmembrane segment spans residues 472–496 (MLPTLFARCSIALVICAAVLILLIV). The Cytoplasmic segment spans residues 497–511 (PIRRLMNNTQGQQTA).

The protein belongs to the major facilitator superfamily. Proton-dependent oligopeptide transporter (POT/PTR) (TC 2.A.17) family.

Its subcellular location is the cell inner membrane. Transport is inhibited by the proton ionophore carbonyl cyanide m-chlorophenylhydrazone (CCCP). In terms of biological role, mediates the proton-dependent uptake of dipeptides. Shows higher affinity for dipeptides with a negatively charged amino acid residue at the N-terminal position, such as Asp-Ala and Glu-Ala. Also displays specificity for Ala-Ala, Ala-Tyr and Tyr-Ala. The sequence is that of Peptide transporter YePEPT from Yersinia enterocolitica subsp. palearctica serotype O:3 (strain YE-P4).